A 323-amino-acid polypeptide reads, in one-letter code: MRLIFAGTPEFARVALAQLHAGGHEIALVLTQPDRPAGRGMKLQASAVKQFALDHGLALAQPRSLRLDGKYPEDAAAAREALVAAQADAMVVAAYGLILPQWVLDVPARGCFNIHASLLPRWRGAAPIHRAIEAGDAQTGVTIMQMDAGLDTGAMLQAQAIPIGAGDTTGSLHDRLAELGAQLMLQVLAQAVHGSLQPVAQAAQGVTYAPKIEKHEAAIDWTQPAAVIAQRIRAFNPFPGATAVLNGETLKIWLADVAPGVPPVSKEFGSILAVAPVGIEVVAMKSIVNITQLQRPGGKRLGVAEFLRGFDLQPGMVFERHGS.

Residue 117–120 (SLLP) coordinates (6S)-5,6,7,8-tetrahydrofolate.

Belongs to the Fmt family.

It carries out the reaction L-methionyl-tRNA(fMet) + (6R)-10-formyltetrahydrofolate = N-formyl-L-methionyl-tRNA(fMet) + (6S)-5,6,7,8-tetrahydrofolate + H(+). In terms of biological role, attaches a formyl group to the free amino group of methionyl-tRNA(fMet). The formyl group appears to play a dual role in the initiator identity of N-formylmethionyl-tRNA by promoting its recognition by IF2 and preventing the misappropriation of this tRNA by the elongation apparatus. This chain is Methionyl-tRNA formyltransferase, found in Albidiferax ferrireducens (strain ATCC BAA-621 / DSM 15236 / T118) (Rhodoferax ferrireducens).